The sequence spans 216 residues: Homeobox-leucine zipper protein ATHB-40 (216 aa).

A disordered region spans residues 28–52 (GEVKQPKRRRKKTKGSVASADGGNG). Residues 52–111 (GLFRKRKLTDEQVNMLEMSFGDEHKLESERKDRLAAELGLDPRQVAVWFQNRRARWKNKR) constitute a DNA-binding region (homeobox). The interval 112 to 140 (LEEEYNKLKNSHDNVVVDKCRLESEVIQL) is leucine-zipper.

The protein belongs to the HD-ZIP homeobox family. Class I subfamily. Expressed in roots, flowers and siliques.

The protein resides in the nucleus. In terms of biological role, probable transcription factor. The sequence is that of Homeobox-leucine zipper protein ATHB-40 (ATHB-40) from Arabidopsis thaliana (Mouse-ear cress).